Here is a 227-residue protein sequence, read N- to C-terminus: Cytidylate kinase (227 aa).

ATP is bound at residue 7 to 15 (GPSGAGKGT).

Belongs to the cytidylate kinase family. Type 1 subfamily.

It is found in the cytoplasm. It carries out the reaction CMP + ATP = CDP + ADP. It catalyses the reaction dCMP + ATP = dCDP + ADP. The sequence is that of Cytidylate kinase from Actinobacillus succinogenes (strain ATCC 55618 / DSM 22257 / CCUG 43843 / 130Z).